The following is a 436-amino-acid chain: MVPEPGPVNSSTPAWGPGPPPAPGGSGWVAAALCVVIVLTAAANSLLIVLICTQPALRNTSNFFLVSLFTSDLMVGLVVMPPAMLNALYGRWVLARGLCLLWTAFDVMCCSASILNLCLISLDRYLLILSPLRYKLRMTAPRALALILGAWSLAALASFLPLLLGWHELGKARTPAPGQCRLLASLPFVLVASGVTFFLPSGAICFTYCRILLAARKQAVQVASLTTGTAGQALETLQVPRTPRPGMESADSRRLATKHSRKALKASLTLGILLGMFFVTWLPFFVANIAQAVCDCISPGLFDVLTWLGYCNSTMNPIIYPLFMRDFKRALGRFLPCVHCPPEHRPALPPPPCGPLTAVPDQASACSRCCLCLCRQTQIQTPLQGAPRACSSQPSFCCLERPPGTPRHPPGPPLWSTSLSQTLWSLRYGRIHSVPP.

Topologically, residues 1–27 are extracellular; it reads MVPEPGPVNSSTPAWGPGPPPAPGGSG. Asn-9 is a glycosylation site (N-linked (GlcNAc...) asparagine). The helical transmembrane segment at 28–52 threads the bilayer; it reads WVAAALCVVIVLTAAANSLLIVLIC. The Cytoplasmic portion of the chain corresponds to 53-62; sequence TQPALRNTSN. A helical transmembrane segment spans residues 63 to 88; the sequence is FFLVSLFTSDLMVGLVVMPPAMLNAL. Residues 89-96 lie on the Extracellular side of the membrane; it reads YGRWVLAR. The helical transmembrane segment at 97-122 threads the bilayer; sequence GLCLLWTAFDVMCCSASILNLCLISL. A disulfide bridge connects residues Cys-99 and Cys-180. A serotonin-binding site is contributed by Asp-106. The Cytoplasmic portion of the chain corresponds to 123–142; that stretch reads DRYLLILSPLRYKLRMTAPR. A helical membrane pass occupies residues 143 to 167; the sequence is ALALILGAWSLAALASFLPLLLGWH. Over 168-185 the chain is Extracellular; sequence ELGKARTPAPGQCRLLAS. The chain crosses the membrane as a helical span at residues 186 to 209; the sequence is LPFVLVASGVTFFLPSGAICFTYC. Residues 210–266 lie on the Cytoplasmic side of the membrane; the sequence is RILLAARKQAVQVASLTTGTAGQALETLQVPRTPRPGMESADSRRLATKHSRKALKA. The helical transmembrane segment at 267–293 threads the bilayer; it reads SLTLGILLGMFFVTWLPFFVANIAQAV. Asn-288 is a binding site for serotonin. The Extracellular portion of the chain corresponds to 294-299; the sequence is CDCISP. A helical membrane pass occupies residues 300–323; the sequence is GLFDVLTWLGYCNSTMNPIIYPLF. Topologically, residues 324 to 436 are cytoplasmic; the sequence is MRDFKRALGR…RYGRIHSVPP (113 aa).

The protein belongs to the G-protein coupled receptor 1 family. Interacts with MTOR, RPTOR and NF1. Interacts with CDK5. Localized exclusively in the central nervous system, predominantly in the corpus striatum but also in various limbic and cortical regions.

It localises to the cell membrane. G-protein coupled receptor for 5-hydroxytryptamine (serotonin), a biogenic hormone that functions as a neurotransmitter, a hormone and a mitogen. Also has a high affinity for tricyclic psychotropic drugs. Ligand binding causes a conformation change that triggers signaling via guanine nucleotide-binding proteins (G proteins) and modulates the activity of downstream effectors. HTR6 is coupled to G(s) G alpha proteins and mediates activation of adenylate cyclase activity. Controls pyramidal neurons migration during corticogenesis, through the regulation of CDK5 activity. Is an activator of mTOR signaling. This chain is 5-hydroxytryptamine receptor 6 (Htr6), found in Rattus norvegicus (Rat).